The primary structure comprises 201 residues: Large ribosomal subunit protein uL4 (201 aa).

The disordered stretch occupies residues 44–71 (RAQKTRAEVTGSGKKPWRQKGTGRARSG).

It belongs to the universal ribosomal protein uL4 family. Part of the 50S ribosomal subunit.

Functionally, one of the primary rRNA binding proteins, this protein initially binds near the 5'-end of the 23S rRNA. It is important during the early stages of 50S assembly. It makes multiple contacts with different domains of the 23S rRNA in the assembled 50S subunit and ribosome. Its function is as follows. Forms part of the polypeptide exit tunnel. The protein is Large ribosomal subunit protein uL4 of Pectobacterium carotovorum subsp. carotovorum (strain PC1).